The sequence spans 299 residues: Coenzyme PQQ synthesis protein B (299 aa).

It belongs to the PqqB family.

Its pathway is cofactor biosynthesis; pyrroloquinoline quinone biosynthesis. In terms of biological role, may be involved in the transport of PQQ or its precursor to the periplasm. The protein is Coenzyme PQQ synthesis protein B of Methylobacterium radiotolerans (strain ATCC 27329 / DSM 1819 / JCM 2831 / NBRC 15690 / NCIMB 10815 / 0-1).